Here is a 520-residue protein sequence, read N- to C-terminus: Cyclic AMP-responsive element-binding protein 3-like protein 2 (520 aa).

Over 1–378 (MEVLESGEQG…CKLAGTQTGT (378 aa)) the chain is Cytoplasmic. A Phosphoserine modification is found at Ser93. Residue Lys178 forms a Glycyl lysine isopeptide (Lys-Gly) (interchain with G-Cter in SUMO2) linkage. Ser191 carries the post-translational modification Phosphoserine. The disordered stretch occupies residues 195–264 (APVDHLHLPP…PHKLQGSGPL (70 aa)). Composition is skewed to low complexity over residues 208–220 (SSHG…SLSP) and 234–255 (SPSR…LTAP). A bZIP domain is found at 294–357 (ALKKIRRKIK…RTLLQQLQKL (64 aa)). Residues 296–325 (KKIRRKIKNKISAQESRRKKKEYMDSLEKK) are basic motif. The segment at 336-357 (LRKKVEVLENTNRTLLQQLQKL) is leucine-zipper. Residues 379-399 (CLMVVVLCFAVAFGSFFQGYG) form a helical; Signal-anchor for type II membrane protein membrane-spanning segment. Topologically, residues 400–520 (PYPSATKMAL…ELDRRVNTTF (121 aa)) are lumenal. The S1P recognition signature appears at 427-430 (RNLL). N-linked (GlcNAc...) asparagine glycans are attached at residues Asn480, Asn504, and Asn517.

It belongs to the bZIP family. ATF subfamily. Binds DNA as a dimer. In terms of processing, upon ER stress, translocated to the Golgi apparatus, where it is processed by regulated intramembrane proteolysis (RIP) to release the cytosol-facing N-terminal transcription factor domain. The cleavage is performed sequentially by site-1 and site-2 proteases (S1P/MBTPS1 and S2P/MBTPS2). Post-translationally, N-glycosylated. Ubiquitinated by HRD1/SYVN1; undergoes 'Lys-48'-linked ubiquitination, followed by rapid proteasomal degradation under normal conditions. Upon ER stress, SYVN1 E3 ubiquitin-protein ligase dissociates from its substrate, ubiquitination does not occur and CREB3L2 is stabilized.

The protein localises to the endoplasmic reticulum membrane. It localises to the nucleus. Functionally, transcription factor involved in unfolded protein response (UPR). In the absence of endoplasmic reticulum (ER) stress, inserted into ER membranes, with N-terminal DNA-binding and transcription activation domains oriented toward the cytosolic face of the membrane. In response to ER stress, transported to the Golgi, where it is cleaved in a site-specific manner by resident proteases S1P/MBTPS1 and S2P/MBTPS2. The released N-terminal cytosolic domain is translocated to the nucleus to effect transcription of specific target genes. Plays a critical role in chondrogenesis by activating the transcription of SEC23A, which promotes the transport and secretion of cartilage matrix proteins, and possibly that of ER biogenesis-related genes. In a neuroblastoma cell line, protects cells from ER stress-induced death. In vitro activates transcription of target genes via direct binding to the CRE site. This Pongo abelii (Sumatran orangutan) protein is Cyclic AMP-responsive element-binding protein 3-like protein 2 (CREB3L2).